Here is a 342-residue protein sequence, read N- to C-terminus: Nucleoid-associated protein Sbal223_1817 (342 aa).

This sequence belongs to the YejK family.

It localises to the cytoplasm. Its subcellular location is the nucleoid. In Shewanella baltica (strain OS223), this protein is Nucleoid-associated protein Sbal223_1817.